The chain runs to 597 residues: Cysteine/serine-rich nuclear protein 3 (597 aa).

2 disordered regions span residues 22-64 (EDVD…TPSS) and 348-407 (CQGD…GFVE). A compositionally biased stretch (low complexity) spans 42–52 (SSESADSGDSV). The segment covering 53-64 (NPSTSNHFTPSS) has biased composition (polar residues). Positions 348–359 (CQGDEEEEEEDG) are enriched in acidic residues. Residues 361–376 (SFCSGATDSSTQSLAP) are compositionally biased toward polar residues. Residues 378–401 (ESDEEEEEEEEEEEEEEEDDDDDK) are compositionally biased toward acidic residues.

The protein belongs to the AXUD1 family. In terms of tissue distribution, detected only in the brain of 15 dpc, 18 dpc, newborn and P6 mice (at protein level).

It localises to the nucleus. In terms of biological role, binds to the consensus sequence 5'-AGAGTG-3' and has transcriptional activator activity. Plays a role in apoptosis. The protein is Cysteine/serine-rich nuclear protein 3 (Csrnp3) of Mus musculus (Mouse).